We begin with the raw amino-acid sequence, 136 residues long: Small ribosomal subunit protein bS6 (136 aa).

Residues 97–128 show a composition bias toward basic and acidic residues; that stretch reads EKEQSAMLSRPDRDDFPGKDEERPRPSRRQYE. Residues 97 to 136 form a disordered region; that stretch reads EKEQSAMLSRPDRDDFPGKDEERPRPSRRQYEDVVEGGVE.

Belongs to the bacterial ribosomal protein bS6 family.

Its function is as follows. Binds together with bS18 to 16S ribosomal RNA. This is Small ribosomal subunit protein bS6 from Bartonella bacilliformis (strain ATCC 35685 / KC583 / Herrer 020/F12,63).